The sequence spans 248 residues: Mannose-binding protein C (248 aa).

The signal sequence occupies residues 1 to 20 (MSLFPSLPLLLLSMVAASYS). Positions 42 to 99 (GINGFPGKDGRDGTKGEKGEPGQGLRGLQGPPGKLGPPGNPGPSGSPGAKGQKGDPGA) constitute a Collagen-like domain. Residues 43–112 (INGFPGKDGR…CDSSLANPER (70 aa)) are disordered. A 4-hydroxyproline modification is found at proline 47. The segment covering 49–61 (KDGRDGTKGEKGE) has biased composition (basic and acidic residues). Proline 73, proline 79, proline 82, and proline 88 each carry 4-hydroxyproline. The stretch at 112-130 (RKTLQTEINRIKKWVTFSL) forms a coiled coil. Residues 134 to 245 (VGKKLFLTNG…CSSSHLVICE (112 aa)) enclose the C-type lectin domain. Intrachain disulfides connect cysteine 155–cysteine 244 and cysteine 222–cysteine 236.

In terms of assembly, oligomeric complex of 3 or more homotrimers. Interacts with MASP1 and MASP2. Interacts with MEP1A and MEP1B and may inhibit their catalytic activity. In terms of processing, hydroxylation on proline residues within the sequence motif, GXPG, is most likely to be 4-hydroxy as this fits the requirement for 4-hydroxylation in vertebrates.

The protein localises to the secreted. Functionally, calcium-dependent lectin involved in innate immune defense. Binds mannose, fucose and N-acetylglucosamine on different microorganisms and activates the lectin complement pathway. Binds to late apoptotic cells, as well as to apoptotic blebs and to necrotic cells, but not to early apoptotic cells, facilitating their uptake by macrophages. This is Mannose-binding protein C (MBL2) from Callithrix jacchus (White-tufted-ear marmoset).